The primary structure comprises 239 residues: Tetraspanin-9 (239 aa).

Topologically, residues 1 to 13 (MARGCLCCLKYMM) are cytoplasmic. The chain crosses the membrane as a helical span at residues 14–34 (FLFNLIFWLCGCGLLGVGIWL). The Extracellular portion of the chain corresponds to 35–55 (SVSQGNFATFSPSFPSLSAAN). A helical membrane pass occupies residues 56 to 76 (LVIAIGTIVMVTGFLGCLGAI). The Cytoplasmic portion of the chain corresponds to 77-85 (KENKCLLLS). A helical membrane pass occupies residues 86-106 (FFIVLLVILLAELILLILFFV). Over 107–203 (YMDKVNENAK…VKMWFDDNKH (97 aa)) the chain is Extracellular. An N-linked (GlcNAc...) asparagine glycan is attached at Asn180. The helical transmembrane segment at 204–224 (VLGTVGMCILIMQILGMAFSM) threads the bilayer. Topologically, residues 225–239 (TLFQHIHRTGKKYDA) are cytoplasmic.

It belongs to the tetraspanin (TM4SF) family. As to quaternary structure, found in a complex with GP6. In terms of processing, glycosylated. In terms of tissue distribution, expressed in megakaryocytes and platelets (at protein level).

The protein localises to the membrane. This chain is Tetraspanin-9 (TSPAN9), found in Homo sapiens (Human).